The following is a 317-amino-acid chain: Protoheme IX farnesyltransferase (317 aa).

9 consecutive transmembrane segments (helical) span residues 29-49 (LILL…QGRV), 53-73 (LLLI…TINC), 102-122 (VFLA…FANL), 123-143 (LSAC…THWL), 151-171 (IVIG…AVTG), 179-199 (VLFG…AMLI), 224-241 (IFLY…LVYP), 245-267 (VSWG…AWQL), and 283-303 (FSIL…LLLP).

Belongs to the UbiA prenyltransferase family. Protoheme IX farnesyltransferase subfamily.

Its subcellular location is the cell inner membrane. It carries out the reaction heme b + (2E,6E)-farnesyl diphosphate + H2O = Fe(II)-heme o + diphosphate. It participates in porphyrin-containing compound metabolism; heme O biosynthesis; heme O from protoheme: step 1/1. In terms of biological role, converts heme B (protoheme IX) to heme O by substitution of the vinyl group on carbon 2 of heme B porphyrin ring with a hydroxyethyl farnesyl side group. The protein is Protoheme IX farnesyltransferase of Thermosynechococcus vestitus (strain NIES-2133 / IAM M-273 / BP-1).